The sequence spans 450 residues: Exodeoxyribonuclease 7 large subunit (450 aa).

It belongs to the XseA family. As to quaternary structure, heterooligomer composed of large and small subunits.

It localises to the cytoplasm. The catalysed reaction is Exonucleolytic cleavage in either 5'- to 3'- or 3'- to 5'-direction to yield nucleoside 5'-phosphates.. Its function is as follows. Bidirectionally degrades single-stranded DNA into large acid-insoluble oligonucleotides, which are then degraded further into small acid-soluble oligonucleotides. The chain is Exodeoxyribonuclease 7 large subunit from Listeria monocytogenes serotype 4b (strain CLIP80459).